The primary structure comprises 621 residues: 1-deoxy-D-xylulose-5-phosphate synthase (621 aa).

Thiamine diphosphate-binding positions include histidine 80 and 121 to 123; that span reads GHS. Aspartate 152 contributes to the Mg(2+) binding site. Thiamine diphosphate is bound by residues 153–154, asparagine 181, tyrosine 288, and glutamate 370; that span reads GA. Asparagine 181 lines the Mg(2+) pocket.

It belongs to the transketolase family. DXPS subfamily. Homodimer. Mg(2+) is required as a cofactor. Thiamine diphosphate serves as cofactor.

It catalyses the reaction D-glyceraldehyde 3-phosphate + pyruvate + H(+) = 1-deoxy-D-xylulose 5-phosphate + CO2. It participates in metabolic intermediate biosynthesis; 1-deoxy-D-xylulose 5-phosphate biosynthesis; 1-deoxy-D-xylulose 5-phosphate from D-glyceraldehyde 3-phosphate and pyruvate: step 1/1. Functionally, catalyzes the acyloin condensation reaction between C atoms 2 and 3 of pyruvate and glyceraldehyde 3-phosphate to yield 1-deoxy-D-xylulose-5-phosphate (DXP). In Shewanella woodyi (strain ATCC 51908 / MS32), this protein is 1-deoxy-D-xylulose-5-phosphate synthase.